The chain runs to 804 residues: DNA gyrase subunit B (804 aa).

Positions 431-546 (CEMYIVEGDS…NGCVYIAQPP (116 aa)) constitute a Toprim domain. 3 residues coordinate Mg(2+): E437, D511, and D513.

The protein belongs to the type II topoisomerase GyrB family. As to quaternary structure, heterotetramer, composed of two GyrA and two GyrB chains. In the heterotetramer, GyrA contains the active site tyrosine that forms a transient covalent intermediate with DNA, while GyrB binds cofactors and catalyzes ATP hydrolysis. The cofactor is Mg(2+). Requires Mn(2+) as cofactor. Ca(2+) is required as a cofactor.

Its subcellular location is the cytoplasm. It carries out the reaction ATP-dependent breakage, passage and rejoining of double-stranded DNA.. A type II topoisomerase that negatively supercoils closed circular double-stranded (ds) DNA in an ATP-dependent manner to modulate DNA topology and maintain chromosomes in an underwound state. Negative supercoiling favors strand separation, and DNA replication, transcription, recombination and repair, all of which involve strand separation. Also able to catalyze the interconversion of other topological isomers of dsDNA rings, including catenanes and knotted rings. Type II topoisomerases break and join 2 DNA strands simultaneously in an ATP-dependent manner. The chain is DNA gyrase subunit B from Chlamydia muridarum (strain MoPn / Nigg).